Consider the following 425-residue polypeptide: Enolase (425 aa).

Residue Q163 coordinates (2R)-2-phosphoglycerate. E205 serves as the catalytic Proton donor. Residues D242, E285, and D312 each coordinate Mg(2+). Residues K337, R366, S367, and K388 each contribute to the (2R)-2-phosphoglycerate site. K337 serves as the catalytic Proton acceptor.

It belongs to the enolase family. It depends on Mg(2+) as a cofactor.

It localises to the cytoplasm. Its subcellular location is the secreted. The protein resides in the cell surface. The catalysed reaction is (2R)-2-phosphoglycerate = phosphoenolpyruvate + H2O. The protein operates within carbohydrate degradation; glycolysis; pyruvate from D-glyceraldehyde 3-phosphate: step 4/5. In terms of biological role, catalyzes the reversible conversion of 2-phosphoglycerate (2-PG) into phosphoenolpyruvate (PEP). It is essential for the degradation of carbohydrates via glycolysis. This chain is Enolase, found in Granulibacter bethesdensis (strain ATCC BAA-1260 / CGDNIH1).